A 913-amino-acid polypeptide reads, in one-letter code: Bifunctional uridylyltransferase/uridylyl-removing enzyme (913 aa).

The tract at residues 1 to 358 (MFNCDVTAID…PDEERPKKQP (358 aa)) is uridylyltransferase. The uridylyl-removing stretch occupies residues 359 to 729 (INARFNQVGD…EHRELALDAV (371 aa)). The HD domain occupies 476–592 (VDAHTLFLIR…TLFADLVGNV (117 aa)). ACT domains are found at residues 730-815 (QVFV…RIPR) and 838-913 (IMSL…NDRV).

It belongs to the GlnD family. Mg(2+) serves as cofactor.

The catalysed reaction is [protein-PII]-L-tyrosine + UTP = [protein-PII]-uridylyl-L-tyrosine + diphosphate. The enzyme catalyses [protein-PII]-uridylyl-L-tyrosine + H2O = [protein-PII]-L-tyrosine + UMP + H(+). Its activity is regulated as follows. Uridylyltransferase (UTase) activity is inhibited by glutamine, while glutamine activates uridylyl-removing (UR) activity. Modifies, by uridylylation and deuridylylation, the PII regulatory proteins (GlnB and homologs), in response to the nitrogen status of the cell that GlnD senses through the glutamine level. Under low glutamine levels, catalyzes the conversion of the PII proteins and UTP to PII-UMP and PPi, while under higher glutamine levels, GlnD hydrolyzes PII-UMP to PII and UMP (deuridylylation). Thus, controls uridylylation state and activity of the PII proteins, and plays an important role in the regulation of nitrogen assimilation and metabolism. The sequence is that of Bifunctional uridylyltransferase/uridylyl-removing enzyme from Psychrobacter cryohalolentis (strain ATCC BAA-1226 / DSM 17306 / VKM B-2378 / K5).